Consider the following 89-residue polypeptide: Cell division topological specificity factor (89 aa).

It belongs to the MinE family.

Functionally, prevents the cell division inhibition by proteins MinC and MinD at internal division sites while permitting inhibition at polar sites. This ensures cell division at the proper site by restricting the formation of a division septum at the midpoint of the long axis of the cell. The protein is Cell division topological specificity factor of Klebsiella pneumoniae subsp. pneumoniae (strain ATCC 700721 / MGH 78578).